Reading from the N-terminus, the 185-residue chain is Hypoxanthine/guanine phosphoribosyltransferase (185 aa).

Belongs to the purine/pyrimidine phosphoribosyltransferase family. Archaeal HPRT subfamily. As to quaternary structure, homodimer.

Its subcellular location is the cytoplasm. The enzyme catalyses IMP + diphosphate = hypoxanthine + 5-phospho-alpha-D-ribose 1-diphosphate. It catalyses the reaction GMP + diphosphate = guanine + 5-phospho-alpha-D-ribose 1-diphosphate. The protein operates within purine metabolism; IMP biosynthesis via salvage pathway; IMP from hypoxanthine: step 1/1. Functionally, catalyzes a salvage reaction resulting in the formation of IMP that is energically less costly than de novo synthesis. The protein is Hypoxanthine/guanine phosphoribosyltransferase of Methanococcus vannielii (strain ATCC 35089 / DSM 1224 / JCM 13029 / OCM 148 / SB).